A 201-amino-acid polypeptide reads, in one-letter code: MSKFIQHTGIVVPIDVSNVDTDVIIPKQFLQKITKKGFGKHLFNDWRYVDEKGTILNRKFILNNDIYKNGTILLARENFGCGSSREHAVWALVDYGFKTIIATSFSDIFYSNSLKNSLLPITLSKETIDILFQEVYKNMGMFISVNLLNNKIFVREKQYSFKINSFNKYCLMHGLDDIDLTLKYSSKILNYETLIPEFLKK.

Belongs to the LeuD family. LeuD type 1 subfamily. In terms of assembly, heterodimer of LeuC and LeuD.

It carries out the reaction (2R,3S)-3-isopropylmalate = (2S)-2-isopropylmalate. It functions in the pathway amino-acid biosynthesis; L-leucine biosynthesis; L-leucine from 3-methyl-2-oxobutanoate: step 2/4. Functionally, catalyzes the isomerization between 2-isopropylmalate and 3-isopropylmalate, via the formation of 2-isopropylmaleate. This is 3-isopropylmalate dehydratase small subunit from Buchnera aphidicola subsp. Baizongia pistaciae (strain Bp).